We begin with the raw amino-acid sequence, 315 residues long: Acetyl-coenzyme A carboxylase carboxyl transferase subunit alpha (315 aa).

Residues 32 to 289 form the CoA carboxyltransferase C-terminal domain; sequence EIDLLEASLE…KQAFVDQLEQ (258 aa).

Belongs to the AccA family. In terms of assembly, acetyl-CoA carboxylase is a heterohexamer composed of biotin carboxyl carrier protein (AccB), biotin carboxylase (AccC) and two subunits each of ACCase subunit alpha (AccA) and ACCase subunit beta (AccD).

It localises to the cytoplasm. It catalyses the reaction N(6)-carboxybiotinyl-L-lysyl-[protein] + acetyl-CoA = N(6)-biotinyl-L-lysyl-[protein] + malonyl-CoA. Its pathway is lipid metabolism; malonyl-CoA biosynthesis; malonyl-CoA from acetyl-CoA: step 1/1. Its function is as follows. Component of the acetyl coenzyme A carboxylase (ACC) complex. First, biotin carboxylase catalyzes the carboxylation of biotin on its carrier protein (BCCP) and then the CO(2) group is transferred by the carboxyltransferase to acetyl-CoA to form malonyl-CoA. The protein is Acetyl-coenzyme A carboxylase carboxyl transferase subunit alpha of Staphylococcus haemolyticus (strain JCSC1435).